We begin with the raw amino-acid sequence, 313 residues long: Glutathione S-transferase omega-like 2 (313 aa).

Cys-49 (nucleophile) is an active-site residue. A GST C-terminal domain is found at 161 to 289 (PSSLRTKIDE…TDFKHIKCHY (129 aa)).

It belongs to the GST superfamily. Omega family.

It localises to the cytoplasm. The protein localises to the nucleus. Its subcellular location is the golgi apparatus. It catalyses the reaction RX + glutathione = an S-substituted glutathione + a halide anion + H(+). The enzyme catalyses L-dehydroascorbate + 2 glutathione = glutathione disulfide + L-ascorbate. In terms of biological role, active as '1-Cys' thiol transferase against beta-hydroxyethyl disulfide (HED), as dehydroascorbate reductase and as dimethylarsinic acid reductase, while not active against the standard GST substrate 1-chloro-2,4-dinitrobenzene (CDNB). May be involved in cell wall organization and biogenesis. The polypeptide is Glutathione S-transferase omega-like 2 (gto2) (Schizosaccharomyces pombe (strain 972 / ATCC 24843) (Fission yeast)).